The chain runs to 118 residues: Mu-like prophage FluMu tail tube protein (118 aa).

The interval 12 to 32 (RLNGKEWPSDNDGTLTPGGKE) is disordered.

This sequence to phage Mu protein M.

In Haemophilus influenzae (strain ATCC 51907 / DSM 11121 / KW20 / Rd), this protein is Mu-like prophage FluMu tail tube protein.